Reading from the N-terminus, the 435-residue chain is Bystin (435 aa).

Positions 1–102 are disordered; that stretch reads MPKFKAARGA…VPQDGSDDEE (102 aa). Arginine 40 bears the Omega-N-methylarginine mark. A compositionally biased stretch (basic and acidic residues) spans 71–87; it reads AEHGSGDRPAVPRERTT. Serine 98 is modified (phosphoserine). Threonine 154 bears the Phosphothreonine mark. 2 positions are modified to phosphoserine: serine 165 and serine 412.

This sequence belongs to the bystin family. As to quaternary structure, binds trophinin, tastin and cytokeratins.

The protein resides in the cytoplasm. Its subcellular location is the nucleus. It localises to the nucleolus. Functionally, required for processing of 20S pre-rRNA precursor and biogenesis of 40S ribosomal subunits. This chain is Bystin (BYSL), found in Bos taurus (Bovine).